A 206-amino-acid polypeptide reads, in one-letter code: N-(5'-phosphoribosyl)anthranilate isomerase (206 aa).

It belongs to the TrpF family.

It catalyses the reaction N-(5-phospho-beta-D-ribosyl)anthranilate = 1-(2-carboxyphenylamino)-1-deoxy-D-ribulose 5-phosphate. It functions in the pathway amino-acid biosynthesis; L-tryptophan biosynthesis; L-tryptophan from chorismate: step 3/5. This chain is N-(5'-phosphoribosyl)anthranilate isomerase, found in Nitrosococcus oceani (strain ATCC 19707 / BCRC 17464 / JCM 30415 / NCIMB 11848 / C-107).